The sequence spans 431 residues: O-phosphoseryl-tRNA(Sec) selenium transferase (431 aa).

The segment at 1-36 (MRGLIPDHMLERGRTVLDSYREPVERLLSERRMPEE) is tetramerization. Residue R67 coordinates pyridoxal 5'-phosphate. Positions 88–98 (GRSGTLVDPQP) are phosphate loop (P-loop). 3 residues coordinate substrate: R89, S90, and Q97. The residue at position 269 (K269) is an N6-(pyridoxal phosphate)lysine. R298 is a binding site for substrate.

This sequence belongs to the SepSecS family. Homotetramer. Pyridoxal 5'-phosphate serves as cofactor.

The enzyme catalyses O-phospho-L-seryl-tRNA(Sec) + selenophosphate + H2O = L-selenocysteinyl-tRNA(Sec) + 2 phosphate. It participates in aminoacyl-tRNA biosynthesis; selenocysteinyl-tRNA(Sec) biosynthesis; selenocysteinyl-tRNA(Sec) from L-seryl-tRNA(Sec) (archaeal/eukaryal route): step 2/2. Functionally, converts O-phosphoseryl-tRNA(Sec) to selenocysteinyl-tRNA(Sec) required for selenoprotein biosynthesis. The polypeptide is O-phosphoseryl-tRNA(Sec) selenium transferase (spcS) (Methanopyrus kandleri (strain AV19 / DSM 6324 / JCM 9639 / NBRC 100938)).